Here is a 704-residue protein sequence, read N- to C-terminus: Elongation factor G (704 aa).

Positions 8–290 constitute a tr-type G domain; it reads ARYRNIGISA…AVIEYLPAPT (283 aa). GTP contacts are provided by residues 17-24, 88-92, and 142-145; these read AHIDAGKT, DTPGH, and NKMD.

It belongs to the TRAFAC class translation factor GTPase superfamily. Classic translation factor GTPase family. EF-G/EF-2 subfamily.

It localises to the cytoplasm. In terms of biological role, catalyzes the GTP-dependent ribosomal translocation step during translation elongation. During this step, the ribosome changes from the pre-translocational (PRE) to the post-translocational (POST) state as the newly formed A-site-bound peptidyl-tRNA and P-site-bound deacylated tRNA move to the P and E sites, respectively. Catalyzes the coordinated movement of the two tRNA molecules, the mRNA and conformational changes in the ribosome. The protein is Elongation factor G of Proteus mirabilis (strain HI4320).